A 101-amino-acid chain; its full sequence is Large ribosomal subunit protein uL23 (101 aa).

The protein belongs to the universal ribosomal protein uL23 family. In terms of assembly, part of the 50S ribosomal subunit. Contacts protein L29, and trigger factor when it is bound to the ribosome.

In terms of biological role, one of the early assembly proteins it binds 23S rRNA. One of the proteins that surrounds the polypeptide exit tunnel on the outside of the ribosome. Forms the main docking site for trigger factor binding to the ribosome. In Haemophilus ducreyi (strain 35000HP / ATCC 700724), this protein is Large ribosomal subunit protein uL23.